The following is a 605-amino-acid chain: Threonine--tRNA ligase (605 aa).

The tract at residues 195–497 (DHRKVGKELG…LIEEYAGDFP (303 aa)) is catalytic. Zn(2+)-binding residues include Cys-294, His-345, and His-474.

Belongs to the class-II aminoacyl-tRNA synthetase family. In terms of assembly, homodimer. Zn(2+) is required as a cofactor.

The protein localises to the cytoplasm. It catalyses the reaction tRNA(Thr) + L-threonine + ATP = L-threonyl-tRNA(Thr) + AMP + diphosphate + H(+). Functionally, catalyzes the attachment of threonine to tRNA(Thr) in a two-step reaction: L-threonine is first activated by ATP to form Thr-AMP and then transferred to the acceptor end of tRNA(Thr). Also edits incorrectly charged L-seryl-tRNA(Thr). The polypeptide is Threonine--tRNA ligase (Thermosynechococcus vestitus (strain NIES-2133 / IAM M-273 / BP-1)).